The chain runs to 277 residues: tRNA pseudouridine synthase A (277 aa).

Asp-51 (nucleophile) is an active-site residue. Tyr-109 contributes to the substrate binding site.

It belongs to the tRNA pseudouridine synthase TruA family. Homodimer.

It catalyses the reaction uridine(38/39/40) in tRNA = pseudouridine(38/39/40) in tRNA. Formation of pseudouridine at positions 38, 39 and 40 in the anticodon stem and loop of transfer RNAs. The chain is tRNA pseudouridine synthase A from Nitrosomonas eutropha (strain DSM 101675 / C91 / Nm57).